A 489-amino-acid polypeptide reads, in one-letter code: Rhamnulokinase (489 aa).

Residue 13 to 17 (ASSGR) participates in ATP binding. The cysteines at positions 68 and 222 are disulfide-linked. Substrate-binding positions include glycine 83 and 236–238 (HDT). The active-site Proton acceptor is the aspartate 237. Threonine 259 is an ATP binding site. Residue asparagine 296 participates in substrate binding. Glutamine 304 provides a ligand contact to ATP. Cysteine 353 and cysteine 370 are disulfide-bonded. Glycine 402 contributes to the ATP binding site. A disulfide bridge connects residues cysteine 413 and cysteine 417.

The protein belongs to the rhamnulokinase family. As to quaternary structure, monomer. Mg(2+) is required as a cofactor.

It catalyses the reaction L-rhamnulose + ATP = L-rhamnulose 1-phosphate + ADP + H(+). Its pathway is carbohydrate degradation; L-rhamnose degradation; glycerone phosphate from L-rhamnose: step 2/3. Involved in the catabolism of L-rhamnose (6-deoxy-L-mannose). Catalyzes the transfer of the gamma-phosphate group from ATP to the 1-hydroxyl group of L-rhamnulose to yield L-rhamnulose 1-phosphate. The polypeptide is Rhamnulokinase (Escherichia coli O7:K1 (strain IAI39 / ExPEC)).